We begin with the raw amino-acid sequence, 370 residues long: Anhydro-N-acetylmuramic acid kinase (370 aa).

ATP is bound at residue 12 to 19 (GTSLDGVD).

This sequence belongs to the anhydro-N-acetylmuramic acid kinase family.

The catalysed reaction is 1,6-anhydro-N-acetyl-beta-muramate + ATP + H2O = N-acetyl-D-muramate 6-phosphate + ADP + H(+). It functions in the pathway amino-sugar metabolism; 1,6-anhydro-N-acetylmuramate degradation. The protein operates within cell wall biogenesis; peptidoglycan recycling. Functionally, catalyzes the specific phosphorylation of 1,6-anhydro-N-acetylmuramic acid (anhMurNAc) with the simultaneous cleavage of the 1,6-anhydro ring, generating MurNAc-6-P. Is required for the utilization of anhMurNAc either imported from the medium or derived from its own cell wall murein, and thus plays a role in cell wall recycling. The sequence is that of Anhydro-N-acetylmuramic acid kinase from Proteus mirabilis (strain HI4320).